We begin with the raw amino-acid sequence, 715 residues long: MSLFLSFFISILLCFFNGATTTQFDFSTLAISNLKLLGDARLSNGIVGLTRDLSVPNSGAGKVLYSNPIRFRQPGTHFPTSFSSFFSFSITNVNPSSIGGGLAFVISPDANSIGIAGGSLGLTGPNGSGSKFVAVEFDTLMDVDFKDINSNHVGFDVNGVVSSVSGDLGTVNIDLKSGNTINSWIEYDGLTRVFNVSVSYSNLKPKVPILSFPLDLDRYVNDFMFVGFSGSTQGSTEIHSIEWWSFSSSFGSSLGSGSGSPPPRANLMNPKANSVKSPPPLASQPSSSAIPISSNTQLKTSSSSSCHSRFCKENPGTIAGVVTAGAFFLALFAGALFWVYSKKFKRVERSDSFASEIIKAPKEFSYKELKAGTKNFNESRIIGHGAFGVVYRGILPETGDIVAVKRCSHSSQDKKNEFLSELSIIGSLRHRNLVRLQGWCHEKGEILLVYDLMPNGSLDKALFESRFTLPWDHRKKILLGVASALAYLHRECENQVIHRDVKSSNIMLDESFNAKLGDFGLARQIEHDKSPEATVAAGTMGYLAPEYLLTGRASEKTDVFSYGAVVLEVVSGRRPIEKDLNVQRHNVGVNPNLVEWVWGLYKEGKVSAAADSRLEGKFDEGEMWRVLVVGLACSHPDPAFRPTMRSVVQMLIGEADVPVVPKSRPTMSFSTSHLLLSLQDTLSDCNTVALNSSRSSSWSVPEHNVIIRSDDDHLV.

A signal peptide spans 1 to 21 (MSLFLSFFISILLCFFNGATT). The interval 22–247 (TQFDFSTLAI…IHSIEWWSFS (226 aa)) is legume-lectin like. Residues 22 to 317 (TQFDFSTLAI…SRFCKENPGT (296 aa)) lie on the Extracellular side of the membrane. 2 N-linked (GlcNAc...) asparagine glycosylation sites follow: asparagine 126 and asparagine 195. The interval 255–296 (GSGSGSPPPRANLMNPKANSVKSPPPLASQPSSSAIPISSNT) is disordered. The span at 283-296 (SQPSSSAIPISSNT) shows a compositional bias: low complexity. The chain crosses the membrane as a helical span at residues 318-338 (IAGVVTAGAFFLALFAGALFW). Topologically, residues 339-715 (VYSKKFKRVE…IIRSDDDHLV (377 aa)) are cytoplasmic. A Protein kinase domain is found at 376 to 676 (FNESRIIGHG…MSFSTSHLLL (301 aa)). ATP-binding positions include 382-390 (IGHGAFGVV) and lysine 405. The Proton acceptor role is filled by aspartate 500.

In the C-terminal section; belongs to the protein kinase superfamily. Ser/Thr protein kinase family. This sequence in the N-terminal section; belongs to the leguminous lectin family.

It is found in the cell membrane. The enzyme catalyses L-seryl-[protein] + ATP = O-phospho-L-seryl-[protein] + ADP + H(+). The catalysed reaction is L-threonyl-[protein] + ATP = O-phospho-L-threonyl-[protein] + ADP + H(+). This is L-type lectin-domain containing receptor kinase VIII.1 (LECRK81) from Arabidopsis thaliana (Mouse-ear cress).